The primary structure comprises 849 residues: Mechanosensitive ion channel protein 7 (849 aa).

Residues 1 to 49 are disordered; sequence MEFRKPFKSHSSYKQIISTGDQNEKTKKKKKLANLDDGDIAKTQSSGSS. A compositionally biased stretch (polar residues) spans 9-21; sequence SHSSYKQIISTGD. The next 6 membrane-spanning stretches (helical) occupy residues 231–251, 274–294, 313–333, 344–364, 606–626, and 642–662; these read AITL…VLSL, LVLI…VFFI, TAVQ…FLFD, VLLL…LWLI, MISF…LEIA, and AFMF…LFII.

Belongs to the MscS (TC 1.A.23) family.

Its subcellular location is the membrane. In terms of biological role, mechanosensitive channel that opens in response to stretch forces in the membrane lipid bilayer. In Arabidopsis thaliana (Mouse-ear cress), this protein is Mechanosensitive ion channel protein 7 (MSL7).